Consider the following 280-residue polypeptide: MQNSKYCEKKIHIALFGNPIEHSLSPLIHKNFSKEIKINYNYNSFLCTKSNFFVIVKNFFQNGGFGCNITVPFKKKSFQISNKNTKYVKISNSVNVLKKSSNNNIIGYNTDGIGLIYDLNRLKYITENSFILILGSGGAVYSIVYHLLKKKCCIFILNRTISKSCILVNKFKKFGKIFVFDKNLYTKKFDIIINATSCGLYNFSPKFPKNLIFPNTKCYDISYSKNKKLTPFLSTCRDLGSRKYSDGLGMLVAQAAYSCYIWFNILPNIKKNINLLKSII.

Residues 23–25 and threonine 70 each bind shikimate; that span reads SLS. The active-site Proton acceptor is the lysine 74. Shikimate contacts are provided by asparagine 95 and aspartate 111. NADP(+) contacts are provided by residues 135–139, 158–163, and isoleucine 221; these read GSGGA and NRTISK. Shikimate is bound at residue tyrosine 223. An NADP(+)-binding site is contributed by glycine 247.

The protein belongs to the shikimate dehydrogenase family. In terms of assembly, homodimer.

It carries out the reaction shikimate + NADP(+) = 3-dehydroshikimate + NADPH + H(+). The protein operates within metabolic intermediate biosynthesis; chorismate biosynthesis; chorismate from D-erythrose 4-phosphate and phosphoenolpyruvate: step 4/7. In terms of biological role, involved in the biosynthesis of the chorismate, which leads to the biosynthesis of aromatic amino acids. Catalyzes the reversible NADPH linked reduction of 3-dehydroshikimate (DHSA) to yield shikimate (SA). The sequence is that of Shikimate dehydrogenase (NADP(+)) from Buchnera aphidicola subsp. Cinara cedri (strain Cc).